A 275-amino-acid chain; its full sequence is Phosphite import ATP-binding protein PxtA (275 aa).

In terms of domain architecture, ABC transporter spans 11 to 252 (LRVDRLSVVY…QLERIYAGRS (242 aa)). An ATP-binding site is contributed by 44 to 51 (GLSGAGKS). Residues 251 to 275 (RSTTQPANAPAEPPVMLEPSLEMSR) are disordered.

It belongs to the ABC transporter superfamily. Phosphonates importer (TC 3.A.1.9.1) family. As to quaternary structure, the complex is composed of two ATP-binding proteins (PtxA), two transmembrane proteins (PtxC) and a solute-binding protein (PtxB).

The protein resides in the cell inner membrane. The enzyme catalyses phosphite(out) + ATP + H2O = phosphite(in) + ADP + phosphate + H(+). In terms of biological role, part of the ABC transporter complex PtxABC involved in phosphite import. Responsible for energy coupling to the transport system. In Stutzerimonas stutzeri (Pseudomonas stutzeri), this protein is Phosphite import ATP-binding protein PxtA (ptxA).